Here is a 336-residue protein sequence, read N- to C-terminus: Serpentine receptor class beta-15 (336 aa).

A run of 7 helical transmembrane segments spans residues 24-44 (LFIH…FVIF), 57-77 (FLFS…AIIS), 109-129 (IFMS…FIAM), 142-162 (LGPI…FFIY), 186-206 (FTFF…NSYL), 237-257 (VFVV…IMIL), and 276-296 (GAFT…AVYL).

Belongs to the nematode receptor-like protein srb family.

The protein resides in the membrane. The polypeptide is Serpentine receptor class beta-15 (srb-15) (Caenorhabditis elegans).